The following is a 141-amino-acid chain: ATP synthase epsilon chain (141 aa).

This sequence belongs to the ATPase epsilon chain family. In terms of assembly, F-type ATPases have 2 components, CF(1) - the catalytic core - and CF(0) - the membrane proton channel. CF(1) has five subunits: alpha(3), beta(3), gamma(1), delta(1), epsilon(1). CF(0) has three main subunits: a, b and c.

It is found in the cell inner membrane. In terms of biological role, produces ATP from ADP in the presence of a proton gradient across the membrane. The polypeptide is ATP synthase epsilon chain (Hahella chejuensis (strain KCTC 2396)).